Consider the following 484-residue polypeptide: Probable cytochrome P450 555A1 (484 aa).

Residues 1–21 (MIIIVIVVFLFYFSFLNLNLN) form a helical membrane-spanning segment. Cys-432 serves as a coordination point for heme.

The protein belongs to the cytochrome P450 family. The cofactor is heme.

It localises to the membrane. The chain is Probable cytochrome P450 555A1 (cyp555A1) from Dictyostelium discoideum (Social amoeba).